Here is a 519-residue protein sequence, read N- to C-terminus: MTQADNQNPKPMVLIILDGFGESDETTHNAIKEANTPTLDKLFRHYPHTLLEASGRAVGLPDGQMGNSEVGHLHIGGGRKVPQDLTRIDAAIASGEFYENPALIEALEKAKALNKAVHILGLLSPGGVHSRDNQIAALVELAHRCGIKKIYLHAILDGRDTPPKSALLSIEKITDQFHAYGNGKIASLIGRYYAMDRDKRWDRTEKAYDLLTQGTAQFHAPTAKEGLMLAYEQGNTDEFVSPTSIHRHNETPITIEDGDVVVFMNFRADRARQLTYAFLDDHFTAFNRQVRPKLSAFVTLTAYAKDIHAAVAFPPLELHNTLGEYLSARGYRQLRIAETEKYAHVTYFLNGGQEAPFNGEDRLLIPSPKVATYDLQPEMSAVEMTNKLVEIIQNDDYDLIVCNFANPDMVGHTGDETATREAIQVIDDCLKRIITALQSVGGEALITADHGNAEKMFDEKTNQPHTAHTSNLVPLIYVGREAQFCKEVGALDDVAPTLLYLMGLEKPREMTGRNLITLK.

Residues D18 and S68 each coordinate Mn(2+). The active-site Phosphoserine intermediate is S68. Substrate contacts are provided by residues H129, 159–160 (RD), R191, R197, 267–270 (RADR), and K341. Mn(2+)-binding residues include D408, H412, D449, H450, and H468.

The protein belongs to the BPG-independent phosphoglycerate mutase family. In terms of assembly, monomer. The cofactor is Mn(2+).

It carries out the reaction (2R)-2-phosphoglycerate = (2R)-3-phosphoglycerate. Its pathway is carbohydrate degradation; glycolysis; pyruvate from D-glyceraldehyde 3-phosphate: step 3/5. Its function is as follows. Catalyzes the interconversion of 2-phosphoglycerate and 3-phosphoglycerate. This is 2,3-bisphosphoglycerate-independent phosphoglycerate mutase from Coxiella burnetii (strain Dugway 5J108-111).